A 265-amino-acid polypeptide reads, in one-letter code: Hydroxyethylthiazole kinase 2 (265 aa).

Met39 serves as a coordination point for substrate. 2 residues coordinate ATP: Lys115 and Thr168. Residue Gly195 coordinates substrate.

The protein belongs to the Thz kinase family. Mg(2+) serves as cofactor.

The enzyme catalyses 5-(2-hydroxyethyl)-4-methylthiazole + ATP = 4-methyl-5-(2-phosphooxyethyl)-thiazole + ADP + H(+). The protein operates within cofactor biosynthesis; thiamine diphosphate biosynthesis; 4-methyl-5-(2-phosphoethyl)-thiazole from 5-(2-hydroxyethyl)-4-methylthiazole: step 1/1. Catalyzes the phosphorylation of the hydroxyl group of 4-methyl-5-beta-hydroxyethylthiazole (THZ). In Clostridium botulinum (strain 657 / Type Ba4), this protein is Hydroxyethylthiazole kinase 2.